Consider the following 545-residue polypeptide: Glucose-6-phosphate isomerase 1 (545 aa).

Glu356 serves as the catalytic Proton donor. Catalysis depends on residues His387 and Lys508.

It belongs to the GPI family.

It is found in the cytoplasm. It catalyses the reaction alpha-D-glucose 6-phosphate = beta-D-fructose 6-phosphate. The protein operates within carbohydrate biosynthesis; gluconeogenesis. It functions in the pathway carbohydrate degradation; glycolysis; D-glyceraldehyde 3-phosphate and glycerone phosphate from D-glucose: step 2/4. Functionally, catalyzes the reversible isomerization of glucose-6-phosphate to fructose-6-phosphate. The polypeptide is Glucose-6-phosphate isomerase 1 (Cupriavidus pinatubonensis (strain JMP 134 / LMG 1197) (Cupriavidus necator (strain JMP 134))).